The primary structure comprises 356 residues: MTKHIAILRGDGIGPEIVAETVRVLDKFIAQGLDADYEYAPLGGEAYDEYGHPYPEFTQNLCRKADAVLLGAVGSPQYDNLDRPLRPERGLLAIRKDLNLFANLRPAVLYPELANASTLKPEIVAGLDILIVRELTGDIYFGEPRGIRVLENGEHEGYNTMKYSESEIRRIAHVAFQSAQKRSKKVCSVGKANVLETTELWREIFEEIGKQYPDVELSHMYVDNAAMQLVRAPKQFDVIATGNIFGDILSDEASMLTGSIGMLPSASLDENGKGLYEPSHGSAPDIAGQNKANPLATILSLAMLLRYSLNDEARAQQVENSVQKVLQQGLRTGDIYEEGTKLVSCSEMGDAVLAAL.

Residues arginine 95, arginine 105, arginine 133, and aspartate 223 each coordinate substrate. Aspartate 223, aspartate 247, and aspartate 251 together coordinate Mg(2+). 281–293 contacts NAD(+); the sequence is GSAPDIAGQNKAN.

It belongs to the isocitrate and isopropylmalate dehydrogenases family. LeuB type 1 subfamily. In terms of assembly, homodimer. Mg(2+) serves as cofactor. The cofactor is Mn(2+).

It is found in the cytoplasm. It carries out the reaction (2R,3S)-3-isopropylmalate + NAD(+) = 4-methyl-2-oxopentanoate + CO2 + NADH. It participates in amino-acid biosynthesis; L-leucine biosynthesis; L-leucine from 3-methyl-2-oxobutanoate: step 3/4. Its function is as follows. Catalyzes the oxidation of 3-carboxy-2-hydroxy-4-methylpentanoate (3-isopropylmalate) to 3-carboxy-4-methyl-2-oxopentanoate. The product decarboxylates to 4-methyl-2 oxopentanoate. The chain is 3-isopropylmalate dehydrogenase from Neisseria gonorrhoeae (strain ATCC 700825 / FA 1090).